The primary structure comprises 148 residues: MEVILLEKVANLGNLGDKVKVRAGYGRNFLVPYGKAVPATKANVEQFEARRAELEKSAAEKLSAAQARAEAINGKEVTIVAKSGDEGKLFGSVGTKDIADAVTALGVEVEKSEVRLPEGALRNTGEYEVDVQMHTDVTATVKVIVVGE.

It belongs to the bacterial ribosomal protein bL9 family.

Its function is as follows. Binds to the 23S rRNA. In Hahella chejuensis (strain KCTC 2396), this protein is Large ribosomal subunit protein bL9.